A 239-amino-acid chain; its full sequence is 1-(5-phosphoribosyl)-5-[(5-phosphoribosylamino)methylideneamino] imidazole-4-carboxamide isomerase (239 aa).

Asp8 functions as the Proton acceptor in the catalytic mechanism. The active-site Proton donor is Asp129.

This sequence belongs to the HisA/HisF family.

The protein localises to the cytoplasm. The enzyme catalyses 1-(5-phospho-beta-D-ribosyl)-5-[(5-phospho-beta-D-ribosylamino)methylideneamino]imidazole-4-carboxamide = 5-[(5-phospho-1-deoxy-D-ribulos-1-ylimino)methylamino]-1-(5-phospho-beta-D-ribosyl)imidazole-4-carboxamide. It participates in amino-acid biosynthesis; L-histidine biosynthesis; L-histidine from 5-phospho-alpha-D-ribose 1-diphosphate: step 4/9. In Bacillus cereus (strain B4264), this protein is 1-(5-phosphoribosyl)-5-[(5-phosphoribosylamino)methylideneamino] imidazole-4-carboxamide isomerase.